A 119-amino-acid chain; its full sequence is DNA-binding protein TubR (119 aa).

Homodimer. Binds to TubZ filaments via the C-terminus of TubZ. DNA is not required for binding to TubZ.

In terms of biological role, a DNA-binding protein that is part of the type III plasmid partition system used to ensure correct segregation of the pBc10987 plasmid. Binds TubZ filaments but does not influence the GTPase activity of TubZ with or without DNA. Cooperatively binds to multiple regions in tubC (centromere-like site) upstream of its own gene with consensus sequence N(T/A)ATTNC(C/G)GNAAT(A/T)N; probably forms an extended DNA-protein filament. Binds sites in its own promoter region and presumably represses its expression; its effect on RNA expression has not been shown. Does not specifically bind to the putative origin of replication on pBc10987. The chain is DNA-binding protein TubR from Bacillus cereus (strain ATCC 10987 / NRS 248).